A 140-amino-acid polypeptide reads, in one-letter code: Small ribosomal subunit protein uS12 (140 aa).

The tract at residues 1–28 (MPTINQLVRKSRKALEKKSTAPALQKGY) is disordered. 3-methylthioaspartic acid is present on Asp102. The interval 119–140 (GVDKRRQSRSKYGAKRPKEAKK) is disordered. The segment covering 124–140 (RQSRSKYGAKRPKEAKK) has biased composition (basic residues).

It belongs to the universal ribosomal protein uS12 family. In terms of assembly, part of the 30S ribosomal subunit. Contacts proteins S8 and S17. May interact with IF1 in the 30S initiation complex.

In terms of biological role, with S4 and S5 plays an important role in translational accuracy. Interacts with and stabilizes bases of the 16S rRNA that are involved in tRNA selection in the A site and with the mRNA backbone. Located at the interface of the 30S and 50S subunits, it traverses the body of the 30S subunit contacting proteins on the other side and probably holding the rRNA structure together. The combined cluster of proteins S8, S12 and S17 appears to hold together the shoulder and platform of the 30S subunit. This chain is Small ribosomal subunit protein uS12, found in Clostridioides difficile (strain 630) (Peptoclostridium difficile).